Consider the following 293-residue polypeptide: 4-diphosphocytidyl-2-C-methyl-D-erythritol kinase (293 aa).

The active site involves K23. ATP is bound at residue 109–119; the sequence is PVAAGIGGGSA. D151 is a catalytic residue.

This sequence belongs to the GHMP kinase family. IspE subfamily.

The enzyme catalyses 4-CDP-2-C-methyl-D-erythritol + ATP = 4-CDP-2-C-methyl-D-erythritol 2-phosphate + ADP + H(+). It participates in isoprenoid biosynthesis; isopentenyl diphosphate biosynthesis via DXP pathway; isopentenyl diphosphate from 1-deoxy-D-xylulose 5-phosphate: step 3/6. In terms of biological role, catalyzes the phosphorylation of the position 2 hydroxy group of 4-diphosphocytidyl-2C-methyl-D-erythritol. In Rhizorhabdus wittichii (strain DSM 6014 / CCUG 31198 / JCM 15750 / NBRC 105917 / EY 4224 / RW1) (Sphingomonas wittichii), this protein is 4-diphosphocytidyl-2-C-methyl-D-erythritol kinase.